The chain runs to 358 residues: GDSL esterase/lipase EXL5 (358 aa).

The first 21 residues, 1-21 (MFRKKMLVLALFSIYFLSIEA), serve as a signal peptide directing secretion. Asparagine 24 carries an N-linked (GlcNAc...) asparagine glycan. Residue serine 36 is the Nucleophile of the active site. Active-site residues include aspartate 333 and histidine 336.

Belongs to the 'GDSL' lipolytic enzyme family. Flower buds.

Its subcellular location is the secreted. The chain is GDSL esterase/lipase EXL5 (EXL5) from Arabidopsis thaliana (Mouse-ear cress).